A 250-amino-acid chain; its full sequence is Sulfate transporter CysZ (250 aa).

4 consecutive transmembrane segments (helical) span residues 26–46 (LFVL…IYLA), 71–91 (ILWP…FTML), 150–170 (LFIL…WLLF), and 211–231 (IVYL…AAVA).

The protein belongs to the CysZ family.

Its subcellular location is the cell inner membrane. In terms of biological role, high affinity, high specificity proton-dependent sulfate transporter, which mediates sulfate uptake. Provides the sulfur source for the cysteine synthesis pathway. The protein is Sulfate transporter CysZ of Pseudomonas fluorescens (strain Pf0-1).